Reading from the N-terminus, the 969-residue chain is Bifunctional glutamine synthetase adenylyltransferase/adenylyl-removing enzyme (969 aa).

An adenylyl removase region spans residues 1–456; that stretch reads MNWQANIHKL…HFEQLFAAPH (456 aa). The interval 466-969 is adenylyl transferase; sequence EKRLAEVWLG…SALLEDESAK (504 aa).

The protein belongs to the GlnE family. Mg(2+) is required as a cofactor.

The catalysed reaction is [glutamine synthetase]-O(4)-(5'-adenylyl)-L-tyrosine + phosphate = [glutamine synthetase]-L-tyrosine + ADP. The enzyme catalyses [glutamine synthetase]-L-tyrosine + ATP = [glutamine synthetase]-O(4)-(5'-adenylyl)-L-tyrosine + diphosphate. Functionally, involved in the regulation of glutamine synthetase GlnA, a key enzyme in the process to assimilate ammonia. When cellular nitrogen levels are high, the C-terminal adenylyl transferase (AT) inactivates GlnA by covalent transfer of an adenylyl group from ATP to specific tyrosine residue of GlnA, thus reducing its activity. Conversely, when nitrogen levels are low, the N-terminal adenylyl removase (AR) activates GlnA by removing the adenylyl group by phosphorolysis, increasing its activity. The regulatory region of GlnE binds the signal transduction protein PII (GlnB) which indicates the nitrogen status of the cell. This chain is Bifunctional glutamine synthetase adenylyltransferase/adenylyl-removing enzyme, found in Nitrosococcus oceani (strain ATCC 19707 / BCRC 17464 / JCM 30415 / NCIMB 11848 / C-107).